Reading from the N-terminus, the 194-residue chain is Adenine phosphoribosyltransferase (194 aa).

The protein belongs to the purine/pyrimidine phosphoribosyltransferase family. As to quaternary structure, homodimer.

It is found in the cytoplasm. The catalysed reaction is AMP + diphosphate = 5-phospho-alpha-D-ribose 1-diphosphate + adenine. It participates in purine metabolism; AMP biosynthesis via salvage pathway; AMP from adenine: step 1/1. Catalyzes a salvage reaction resulting in the formation of AMP, that is energically less costly than de novo synthesis. The sequence is that of Adenine phosphoribosyltransferase from Albidiferax ferrireducens (strain ATCC BAA-621 / DSM 15236 / T118) (Rhodoferax ferrireducens).